A 138-amino-acid chain; its full sequence is MRALWIVAVLLVGVEGSLVEFETLMMKIAGRSGISYYSSYGCYCGAGGQGWPQDASDRCCFEHDCCYAKLTGCDPTTDVYTYRQEDGEIVCGEDDPCGTQICECDKAAAICFRNSMDTYDYKYLQFSPENCQGESQPC.

The N-terminal stretch at 1 to 37 (MRALWIVAVLLVGVEGSLVEFETLMMKIAGRSGISYY) is a signal peptide. 8 disulfide bridges follow: C42/C131, C44/C60, C59/C111, C65/C138, C66/C104, C73/C97, C91/C102, and C131/C138. Positions 79–82 (VYTY) are excised as a propeptide. The residue at position 84 (Q84) is a Pyrrolidone carboxylic acid. Positions 119 to 124 (YDYKYL) are excised as a propeptide. At Q125 the chain carries Pyrrolidone carboxylic acid.

Belongs to the phospholipase A2 family. Group II subfamily. D49 sub-subfamily. In terms of assembly, heterodimer of one of the acidic (CA1, CA2, CA3 or CA4) and one of the basic (CBa1, CBa2, CBb, CBc or CBd) subunits; non-covalently linked. The acidic subunit is non-toxic, without enzymatic activity and comprises 3 peptides that are cross-linked by 5 disulfide bridges. The basic subunit is toxic, has phospholipase A2 activity and is composed of a single chain. Multiple variants of each subunit give different crotoxin complexes that can be subdivided into 2 classes: (1) those of high toxicity, low PLA2 activity (CBb, CBc and CBd linked with high affinity to any CA) and high stability (K(d)=4.5 nM) and (2) those of moderate toxicity, high PLA2 activity (CBa2 linked with low affinity to any CA) and low stability (K(d)=25 nM). As to expression, expressed by the venom gland.

The protein localises to the secreted. Its function is as follows. CAalpha-CAbeta-CAgamma: The acidic subunit of crotoxin (CA) is a heterotrimer of three disulfide-linked chains generated by post-translational maturation of a PLA2-like precursor. CA has no PLA2 activity and is not neurotoxic by itself, but plays several important functions in the crotoxin complex by increasing the lethal potency of the uncomplexed CB subunit. It acts by physically occluding the hydrophobic interfacial binding surface (IBS) of CB. This effect decreases the adsorption of CB to phospholipid membranes, targeting the crotoxin complex to reach the specific presynaptic receptor (R48) at the neuromuscular junction. It also prevents the formation of the reactive CB dimer. Moreover, the CA subunit inhibits the catalytic activity by partially masking the catalytic site of CB and inhibits its anticoagulant activity. Functionally, heterodimer CA-CB: Crotoxin is a potent presynaptic neurotoxin that possesses phospholipase A2 (PLA2) activity and exerts a lethal action by blocking neuromuscular transmission. It consists of a non-covalent association of a basic and weakly toxic PLA2 subunit (CBa2, CBb, CBc, or CBd), with a small acidic, non-enzymatic and non-toxic subunit (CA1, CA2, CA3 or CA4). The complex acts by binding to a specific 48-kDa protein (R48/CAPT) receptor located on presynaptic membranes, forming a transient ternary complex CA-CB-R48, followed by dissociation of the CA-CB complex and release of the CA subunit. At equilibrium, only the CB subunits remain associated with the specific crotoxin receptor. In addition to neurotoxicity, crotoxin has been found to exert myotoxicity, nephrotoxicity, and cardiovascular toxicity. Moreover, anti-inflammatory, immunomodulatory, anti-tumor and analgesic effects of crotoxin have also been reported. In terms of biological role, found in the venom as a monomer and stabilized by one disulfide bond (Cys-131 and Cys-138). This peptide induces potent antinociceptive effects in acute and chronic pain models. This effect is mediated by the release of peripheral dynorphin A, an endogenous agonist of kappa-opioid receptors, and this release is dependent on cannabinoid receptor CB2 activation. This Crotalus durissus terrificus (South American rattlesnake) protein is Phospholipase A2 homolog crotoxin acid subunit CA.